The chain runs to 486 residues: Cysteine--tRNA ligase (486 aa).

Cysteine 29 provides a ligand contact to Zn(2+). Positions 31 to 41 (VTVYDYCHLGH) match the 'HIGH' region motif. Zn(2+) is bound by residues cysteine 217, histidine 242, and glutamate 246. Residues 274–278 (KMSKS) carry the 'KMSKS' region motif. Lysine 277 is an ATP binding site.

It belongs to the class-I aminoacyl-tRNA synthetase family. Monomer. Zn(2+) is required as a cofactor.

The protein resides in the cytoplasm. The enzyme catalyses tRNA(Cys) + L-cysteine + ATP = L-cysteinyl-tRNA(Cys) + AMP + diphosphate. In Thermosynechococcus vestitus (strain NIES-2133 / IAM M-273 / BP-1), this protein is Cysteine--tRNA ligase.